We begin with the raw amino-acid sequence, 376 residues long: Carbohydrate sulfotransferase 14 (376 aa).

Residues 1–30 (MFPRPLTPLAAPKSAETLGRTPRRAPLGRA) are disordered. Residues 1-39 (MFPRPLTPLAAPKSAETLGRTPRRAPLGRARAGLGGPPL) lie on the Cytoplasmic side of the membrane. Residues 18–30 (LGRTPRRAPLGRA) show a composition bias toward low complexity. Residues 40–60 (LLPSMLMFAVIVASSGLLLMI) traverse the membrane as a helical; Signal-anchor for type II membrane protein segment. Topologically, residues 61–376 (ERGILSEMKP…PNVTKEACHQ (316 aa)) are lumenal. The disordered stretch occupies residues 76 to 96 (PSHKGAAWSGTDPKPRGLSLD). An N-linked (GlcNAc...) asparagine glycan is attached at Asn110. 3'-phosphoadenylyl sulfate is bound by residues 155–161 (PKVACSN) and 213–221 (RDPLERLLS). N-linked (GlcNAc...) asparagine glycosylation is present at Asn368.

Belongs to the sulfotransferase 2 family.

It localises to the golgi apparatus membrane. The enzyme catalyses dermatan + n 3'-phosphoadenylyl sulfate = dermatan 4'-sulfate + n adenosine 3',5'-bisphosphate + n H(+). Functionally, catalyzes the transfer of sulfate to position 4 of the N-acetylgalactosamine (GalNAc) residue of dermatan sulfate. Plays a pivotal role in the formation of 4-0-sulfated IdoA blocks in dermatan sulfate. Transfers sulfate to the C-4 hydroxyl of beta1,4-linked GalNAc that is substituted with an alpha-linked iduronic acid (IdoUA) at the C-3 hydroxyl. Transfers sulfate more efficiently to GalNAc residues in -IdoUA-GalNAc-IdoUA- than in -GlcUA-GalNAc-GlcUA-sequences. Has preference for partially desulfated dermatan sulfate. Addition of sulfate to GalNAc may occur immediately after epimerization of GlcUA to IdoUA. Appears to have an important role in the formation of the cerebellar neural network during postnatal brain development. The chain is Carbohydrate sulfotransferase 14 (Chst14) from Mus musculus (Mouse).